A 338-amino-acid polypeptide reads, in one-letter code: MKVFYDKDADLSLIKGKQVTIIGYGSQGHAHALNLKESGVNITVGLRKGGASWSKAENAGLQVKEVAEAVKGADVVMMLLPDEQIAEVYAKEVHANIKQGAALAFAHGFNVHYGQVIPRADLDVIMIAPKAPGHTVRGTYSQGGGVPHLIAVAQDKSGAARDIALSYAAANGGGRAGIIETNFREETETDLFGEQAVLCGGTVDLIKAGFETLVEAGYAPEMAYFECLHELKLIVDLIYEGGIANMNYSISNNAEYGEYVTGPRIVTAETKKAMKAVLTDIQTGEYAKSFILENKAGAPTLQSRRRLTAEHQIEQVGSKLRAMMPWIAKNKLVDQSKN.

Residues 1–181 (MKVFYDKDAD…GGGRAGIIET (181 aa)) form the KARI N-terminal Rossmann domain. Residues 24–27 (YGSQ), Arg47, and Ser52 contribute to the NADP(+) site. His107 is a catalytic residue. NADP(+) is bound at residue Gly133. The KARI C-terminal knotted domain occupies 182 to 327 (NFREETETDL…SKLRAMMPWI (146 aa)). Mg(2+) contacts are provided by Asp190, Glu194, Glu226, and Glu230. Ser251 is a substrate binding site.

Belongs to the ketol-acid reductoisomerase family. Mg(2+) serves as cofactor.

It catalyses the reaction (2R)-2,3-dihydroxy-3-methylbutanoate + NADP(+) = (2S)-2-acetolactate + NADPH + H(+). The enzyme catalyses (2R,3R)-2,3-dihydroxy-3-methylpentanoate + NADP(+) = (S)-2-ethyl-2-hydroxy-3-oxobutanoate + NADPH + H(+). The protein operates within amino-acid biosynthesis; L-isoleucine biosynthesis; L-isoleucine from 2-oxobutanoate: step 2/4. It functions in the pathway amino-acid biosynthesis; L-valine biosynthesis; L-valine from pyruvate: step 2/4. Involved in the biosynthesis of branched-chain amino acids (BCAA). Catalyzes an alkyl-migration followed by a ketol-acid reduction of (S)-2-acetolactate (S2AL) to yield (R)-2,3-dihydroxy-isovalerate. In the isomerase reaction, S2AL is rearranged via a Mg-dependent methyl migration to produce 3-hydroxy-3-methyl-2-ketobutyrate (HMKB). In the reductase reaction, this 2-ketoacid undergoes a metal-dependent reduction by NADPH to yield (R)-2,3-dihydroxy-isovalerate. This chain is Ketol-acid reductoisomerase (NADP(+)), found in Paraburkholderia xenovorans (strain LB400).